The chain runs to 930 residues: Endoplasmic reticulum aminopeptidase 1 (930 aa).

The Cytoplasmic portion of the chain corresponds to 1–2 (MP). The chain crosses the membrane as a helical; Signal-anchor for type II membrane protein span at residues 3–23 (SLLSLVLTFLAVSSPSCCQNS). The Lumenal segment spans residues 24-930 (DTASPKASNG…WLQKERQELL (907 aa)). 2 N-linked (GlcNAc...) asparagine glycosylation sites follow: Asn-59 and Asn-143. Residues Glu-172 and 306–310 (GAMEN) contribute to the substrate site. His-342 lines the Zn(2+) pocket. Glu-343 serves as the catalytic Proton acceptor. Zn(2+) is bound by residues His-346 and Glu-365. The cysteines at positions 393 and 432 are disulfide-linked. 2 N-linked (GlcNAc...) asparagine glycosylation sites follow: Asn-403 and Asn-655. An intrachain disulfide couples Cys-725 to Cys-732. 2 N-linked (GlcNAc...) asparagine glycosylation sites follow: Asn-749 and Asn-890.

This sequence belongs to the peptidase M1 family. As to quaternary structure, monomer. May also exist as a heterodimer; with ERAP2. Interacts with RBMX. The cofactor is Zn(2+). Post-translationally, N-glycosylated. In terms of tissue distribution, ubiquitous.

It localises to the endoplasmic reticulum membrane. Its function is as follows. Aminopeptidase that plays a central role in peptide trimming, a step required for the generation of most HLA class I-binding peptides. Peptide trimming is essential to customize longer precursor peptides to fit them to the correct length required for presentation on MHC class I molecules. Strongly prefers substrates 9-16 residues long. Rapidly degrades 13-mer to a 9-mer and then stops. Preferentially hydrolyzes the residue Leu and peptides with a hydrophobic C-terminus, while it has weak activity toward peptides with charged C-terminus. May play a role in the inactivation of peptide hormones. May be involved in the regulation of blood pressure through the inactivation of angiotensin II and/or the generation of bradykinin in the kidney. This chain is Endoplasmic reticulum aminopeptidase 1 (Erap1), found in Rattus norvegicus (Rat).